The primary structure comprises 1109 residues: ABC transporter G family member 28 (1109 aa).

Transmembrane regions (helical) follow at residues 5-25 (NSYF…LILQ) and 291-311 (NITA…IILY). Residues 325–411 (QAKSREKAVQ…DTKKGKKKEK (87 aa)) form a disordered region. Residues 339–357 (SQSREKWKSAKDIAKKHAT) are compositionally biased toward basic and acidic residues. In terms of domain architecture, ABC transporter spans 499 to 741 (VAFKDLSITL…FSSLGIVVPE (243 aa)). 533 to 540 (GPSGAGKT) contacts ATP. The ABC transmembrane type-2 domain maps to 859–1056 (QQYRYFLGRL…ALEAFVVSNA (198 aa)). Helical transmembrane passes span 879-899 (LAVD…LAKV), 904-924 (FGAM…KITA), 954-974 (TVDH…FYFF), 986-1006 (VVLI…AILF), 1008-1028 (PGPA…IATS), and 1084-1104 (CLVF…FCMV).

The protein belongs to the ABC transporter superfamily. ABCG family. Eye pigment precursor importer (TC 3.A.1.204) subfamily.

The protein localises to the membrane. This chain is ABC transporter G family member 28 (ABCG28), found in Arabidopsis thaliana (Mouse-ear cress).